A 276-amino-acid polypeptide reads, in one-letter code: Undecaprenyl-diphosphatase 1 (276 aa).

The next 5 membrane-spanning stretches (helical) occupy residues 85–105 (MNVV…EKTI), 108–128 (VLFA…VILW), 187–207 (VATE…TLYE), 217–237 (VDSI…AFAC), and 253–273 (FAWY…SGWI).

Belongs to the UppP family.

The protein resides in the cell inner membrane. It catalyses the reaction di-trans,octa-cis-undecaprenyl diphosphate + H2O = di-trans,octa-cis-undecaprenyl phosphate + phosphate + H(+). In terms of biological role, catalyzes the dephosphorylation of undecaprenyl diphosphate (UPP). Confers resistance to bacitracin. This Burkholderia thailandensis (strain ATCC 700388 / DSM 13276 / CCUG 48851 / CIP 106301 / E264) protein is Undecaprenyl-diphosphatase 1.